Here is a 686-residue protein sequence, read N- to C-terminus: Antigen peptide transporter 2 (686 aa).

Residues 1–6 (MRLPDL) are Lumenal-facing. The chain crosses the membrane as a helical span at residues 7 to 27 (RPWTSLLLVDAALLWLLQGPL). The Cytoplasmic portion of the chain corresponds to 28 to 56 (GTLLPQGLPGLWLEGTLRLGGLWGLLKLR). Residues 57-77 (GLLGFVGTLLLPLCLATPLTV) traverse the membrane as a helical segment. At 78–98 (SLRALVAGASRAPPARVASAP) the chain is on the lumenal side. The helical transmembrane segment at 99-119 (WSWLLVGYGAAGLSWSLWAVL) threads the bilayer. Topologically, residues 120–148 (SPPGAQEKEQDQVNNKVLMWRLLKLSRPD) are cytoplasmic. Residues 149–169 (LPLLVAAFFFLVLAVLGETLI) traverse the membrane as a helical segment. An ABC transmembrane type-1 domain is found at 152–435 (LVAAFFFLVL…LVYIYGDMLS (284 aa)). Over 170–187 (PHYSGRVIDILGGDFDPH) the chain is Lumenal. A helical transmembrane segment spans residues 188–208 (AFASAIFFMCLFSFGSSLSAG). Residues 209–266 (CRGGCFTYTMSRINLRIREQLFSSLLRQDLGFFQETKTGELNSRLSSDTTLMSNWLPL) are Cytoplasmic-facing. The chain crosses the membrane as a helical span at residues 267–287 (NANVLLRSLVKVVGLYGFMLS). Over 288 to 293 (ISPRLT) the chain is Lumenal. A helical transmembrane segment spans residues 294–314 (LLSLLHMPFTIAAEKVYNTRH). Positions 301-389 (PFTIAAEKVY…RRVLHLGVQM (89 aa)) are part of the peptide-binding site. Topologically, residues 315–374 (QEVLREIQDAVARAGQVVREAVGGLQTVRSFGAEEHEVCRYKEALEQCRQLYWRRDLERA) are cytoplasmic. Residues 375-395 (LYLLVRRVLHLGVQMLMLSCG) form a helical membrane-spanning segment. The Lumenal segment spans residues 396–408 (LQQMQDGELTQGS). A helical membrane pass occupies residues 409-429 (LLSFMIYQESVGSYVQTLVYI). Positions 414–433 (IYQESVGSYVQTLVYIYGDM) are part of the peptide-binding site. The Cytoplasmic portion of the chain corresponds to 430-686 (YGDMLSNVGA…EGKLQKLAQL (257 aa)). Residues 468–686 (VKFQDVSFAY…EGKLQKLAQL (219 aa)) enclose the ABC transporter domain. Position 503–510 (503–510 (GPNGSGKS)) interacts with ATP.

The protein belongs to the ABC transporter superfamily. ABCB family. MHC peptide exporter (TC 3.A.1.209) subfamily. In terms of assembly, heterodimer of TAP1 and TAP2 (TAP1-TAP2). A component of the peptide loading complex (PLC), interacts via TAPBP with MHCI heterodimer; this interaction mediates peptide-MHCI assembly. Recruits TAPBP in a 1:1 stoichiometry. Interacts with classical MHCI such as HLA-A*02-B2M; this interaction is obligatory for the loading of peptide epitopes. Interacts with non-classical MHCI molecules including HLA-E-B2M and HLA-F-B2M as well as PLC component CALR before the peptide loading. (Microbial infection) Interacts with Epstein-Barr virus BLNF2a. As to quaternary structure, (Microbial infection) Interacts with herpes simplex virus US12/ICP47. In terms of assembly, (Microbial infection) Interacts with adenovirus E3-19K glycoprotein, which binds TAP1-TAP2 and acts as a TAPBP inhibitor, preventing TAP1-TAP2 association with MHCI. Mg(2+) is required as a cofactor.

It localises to the endoplasmic reticulum membrane. The enzyme catalyses a peptide antigen(in) + ATP + H2O = a peptide antigen(out) + ADP + phosphate + H(+). Its activity is regulated as follows. Inhibited at high ER lumenal peptide concentrations. With respect to regulation, (Microbial infection) Inhibited by herpes simplex virus US12/ICP47 protein, which blocks the peptide-binding site of TAP1-TAP2. (Microbial infection) Inhibited by human cytomegalovirus US6 glycoprotein, which binds to the lumenal side of TAP1-TAP2 complex and inhibits peptide translocation by specifically blocking ATP-binding and preventing TAP1-TAP2 conformational rearrangement induced by peptide binding. In terms of biological role, ABC transporter associated with antigen processing. In complex with TAP1 mediates unidirectional translocation of peptide antigens from cytosol to endoplasmic reticulum (ER) for loading onto MHC class I (MHCI) molecules. Uses the chemical energy of ATP to export peptides against the concentration gradient. During the transport cycle alternates between 'inward-facing' state with peptide binding site facing the cytosol to 'outward-facing' state with peptide binding site facing the ER lumen. Peptide antigen binding to ATP-loaded TAP1-TAP2 induces a switch to hydrolysis-competent 'outward-facing' conformation ready for peptide loading onto nascent MHCI molecules. Subsequently ATP hydrolysis resets the transporter to the 'inward facing' state for a new cycle. Typically transports intracellular peptide antigens of 8 to 13 amino acids that arise from cytosolic proteolysis via IFNG-induced immunoproteasome. Binds peptides with free N- and C-termini, the first three and the C-terminal residues being critical. Preferentially selects peptides having a highly hydrophobic residue at position 3 and hydrophobic or charged residues at the C-terminal anchor. Proline at position 2 has the most destabilizing effect. As a component of the peptide loading complex (PLC), acts as a molecular scaffold essential for peptide-MHCI assembly and antigen presentation. The protein is Antigen peptide transporter 2 of Homo sapiens (Human).